Here is a 208-residue protein sequence, read N- to C-terminus: N-(5'-phosphoribosyl)anthranilate isomerase (208 aa).

This sequence belongs to the TrpF family.

The enzyme catalyses N-(5-phospho-beta-D-ribosyl)anthranilate = 1-(2-carboxyphenylamino)-1-deoxy-D-ribulose 5-phosphate. It participates in amino-acid biosynthesis; L-tryptophan biosynthesis; L-tryptophan from chorismate: step 3/5. This chain is N-(5'-phosphoribosyl)anthranilate isomerase, found in Neisseria meningitidis serogroup B (strain ATCC BAA-335 / MC58).